The following is a 1030-amino-acid chain: Zinc finger and SCAN domain-containing protein 20 (1030 aa).

The disordered stretch occupies residues 22–42 (DSWGSDSRPEKESHSPVPGPE). Positions 45 to 127 (RRCFRQFRYR…ALVEDWHREA (83 aa)) constitute an SCAN box domain. 4 disordered regions span residues 178-201 (DLSKMPPESLKESAVLTPQAPTVP), 213-285 (GKSQ…DSAQ), 411-441 (SGGPGEAVALPRLGDSDTEMDDQDEGSWEPE), and 578-600 (TGLPGSGQSSTEADDQEAWGEME). Over residues 225-240 (AKKEPCQDPAGGDRGD) the composition is skewed to basic and acidic residues. Acidic residues-rich tracts occupy residues 426 to 441 (SDTEMDDQDEGSWEPE) and 589 to 600 (EADDQEAWGEME). A C2H2-type 1; degenerate zinc finger spans residues 697-719 (YGCDTRAKSFSRKVHFFAPQRTH). The segment at 725-747 (YKCLGSGKSFSDRANLSTHQRIH) adopts a C2H2-type 2; degenerate zinc-finger fold. C2H2-type zinc fingers lie at residues 753-775 (YRCLECGKSFNDPSNLITHQRTH) and 781-803 (YKCGLCWKSFNQSSNLLKHQRVH). Disordered regions lie at residues 801–820 (RVHLGGPPNQRDEPGENFGQ) and 828–850 (WRRNSTQEGPKEPQNISMGADSP). 6 consecutive C2H2-type zinc fingers follow at residues 862 to 884 (YSCPECGRCFSKSSALTSHQRIH), 890 to 912 (YECAVCGKSFSKSSSLANHRRTH), 918 to 940 (HKCADCGKCFSERSKLITHQRVH), 946 to 968 (YECPECGKFFRDRSNLITHQRIH), 974 to 996 (YKCRECGKCFNQSSSLIIHQRIH), and 1002 to 1024 (YKCTECGKDFNNSSHFSAHRRTH).

It belongs to the krueppel C2H2-type zinc-finger protein family.

Its subcellular location is the nucleus. Its function is as follows. May be involved in transcriptional regulation. The chain is Zinc finger and SCAN domain-containing protein 20 (Zscan20) from Mus musculus (Mouse).